The chain runs to 88 residues: DNA-directed RNA polymerase subunit omega (88 aa).

Belongs to the RNA polymerase subunit omega family. As to quaternary structure, the RNAP catalytic core consists of 2 alpha, 1 beta, 1 beta' and 1 omega subunit. When a sigma factor is associated with the core the holoenzyme is formed, which can initiate transcription.

The enzyme catalyses RNA(n) + a ribonucleoside 5'-triphosphate = RNA(n+1) + diphosphate. In terms of biological role, promotes RNA polymerase assembly. Latches the N- and C-terminal regions of the beta' subunit thereby facilitating its interaction with the beta and alpha subunits. The protein is DNA-directed RNA polymerase subunit omega of Salinispora arenicola (strain CNS-205).